The following is a 620-amino-acid chain: Transcription factor GTE11 (620 aa).

A disordered region spans residues 1–35; the sequence is MTVRNGGFPGDYNRNSFDSPGGCDDSPNASKDDET. One can recognise a Bromo domain in the interval 124–230; it reads TSTMLRMKQC…KFFEVRWKTI (107 aa). The NET domain maps to 270–351; that stretch reads NSLLEPAKRV…EFLRENQKKD (82 aa). A Phosphoserine modification is found at S417. The transcription activation domain stretch occupies residues 445–620; it reads EKRYRAALLK…GNEVEEGEID (176 aa). Residues 470-544 are a coiled coil; sequence NQNEKRDPET…MEKSVEINEN (75 aa). 2 disordered regions span residues 491-511 and 597-620; these read KKKEKARLQAEAKEAEEARRK and EDEDESDMLAFPDPGNEVEEGEID.

In terms of assembly, interacts with BT1, BT2 and BT4.

The protein resides in the nucleus. This chain is Transcription factor GTE11 (GTE11), found in Arabidopsis thaliana (Mouse-ear cress).